Consider the following 209-residue polypeptide: Outer-membrane lipoprotein LolB (209 aa).

Residues 1–17 (MATVFSRALGALVLGVA) form the signal peptide. Cys-18 carries the N-palmitoyl cysteine lipid modification. Cys-18 carries S-diacylglycerol cysteine lipidation.

The protein belongs to the LolB family. Monomer.

The protein resides in the cell outer membrane. Plays a critical role in the incorporation of lipoproteins in the outer membrane after they are released by the LolA protein. In Ralstonia nicotianae (strain ATCC BAA-1114 / GMI1000) (Ralstonia solanacearum), this protein is Outer-membrane lipoprotein LolB.